The sequence spans 161 residues: Phosphotransferase enzyme IIB component GlvB (161 aa).

The helical transmembrane segment at 10-32 threads the bilayer; that stretch reads LTQIAIGLCFTLLYFVVFRTLIL. In terms of domain architecture, PTS EIIB type-1 spans 70–152; it reads LDQAAGILQA…DSLINSHQSA (83 aa). Catalysis depends on C92, which acts as the Phosphocysteine intermediate.

The protein localises to the cell inner membrane. Its function is as follows. The phosphoenolpyruvate-dependent sugar phosphotransferase system (sugar PTS), a major carbohydrate active -transport system, catalyzes the phosphorylation of incoming sugar substrates concomitantly with their translocation across the cell membrane. This operon may be cryptic in wild-type K12 strains. The polypeptide is Phosphotransferase enzyme IIB component GlvB (Escherichia coli (strain K12)).